The primary structure comprises 211 residues: Probable calcium-binding protein CML11 (211 aa).

Disordered stretches follow at residues 1–22 (MSEPATTTPTPTPAGDHDAAAT) and 40–60 (SCSAQQQQQQQQQQEEPLGDD). Positions 44 to 53 (QQQQQQQQQQ) are enriched in low complexity. EF-hand domains lie at 60 to 95 (DQLGELREIFRSFDRNGDGSLTQLELGSLLRSLGLK), 96 to 131 (PSTDELDSLIQRADTNSNGLIEFSEFVALVAPELLY), 136 to 171 (YSEDQIRRLFNIFDRDGNGFITAAELAHSMAKLGHA), and 172 to 207 (LTVKELTGMIKEADTDGDGRISFQEFSRAITAAAFD). Residues D73, N75, D77, S79, E84, D109, N111, N113, E120, D149, D151, N153, E160, D185, D187, D189, R191, and E196 each coordinate Ca(2+).

Its function is as follows. Potential calcium sensor. The polypeptide is Probable calcium-binding protein CML11 (CML11) (Oryza sativa subsp. japonica (Rice)).